The chain runs to 396 residues: Tryptophan synthase beta chain (396 aa).

Lys-88 is modified (N6-(pyridoxal phosphate)lysine).

This sequence belongs to the TrpB family. In terms of assembly, tetramer of two alpha and two beta chains. The cofactor is pyridoxal 5'-phosphate.

It carries out the reaction (1S,2R)-1-C-(indol-3-yl)glycerol 3-phosphate + L-serine = D-glyceraldehyde 3-phosphate + L-tryptophan + H2O. Its pathway is amino-acid biosynthesis; L-tryptophan biosynthesis; L-tryptophan from chorismate: step 5/5. In terms of biological role, the beta subunit is responsible for the synthesis of L-tryptophan from indole and L-serine. The sequence is that of Tryptophan synthase beta chain from Leptospira biflexa serovar Patoc (strain Patoc 1 / Ames).